The primary structure comprises 430 residues: D-galactonate transporter (430 aa).

Over 1-17 (MDIPVNAAKPGRRRYLT) the chain is Cytoplasmic. The chain crosses the membrane as a helical span at residues 18–39 (LVMIFITVVICYVDRANLAVAS). D-galactonate-binding residues include Tyr-29 and Arg-32. Residues 40-50 (AHIQEEFGITK) are Periplasmic-facing. The chain crosses the membrane as a helical span at residues 51 to 74 (AEMGYVFSAFAWLYTLCQIPGGWF). Tyr-64 contacts D-galactonate. Residues 75 to 81 (LDRVGSR) are Cytoplasmic-facing. The helical transmembrane segment at 82–100 (VTYFIAIFGWSVATLFQGF) threads the bilayer. Residues 101–103 (ATG) lie on the Periplasmic side of the membrane. The helical transmembrane segment at 104-125 (LMSLIGLRAITGIFEAPAFPTN) threads the bilayer. Residues 126–141 (NRMVTSWFPEHERASA) lie on the Cytoplasmic side of the membrane. The helical transmembrane segment at 142–164 (VGFYTSGQFVGLAFLTPLLIWIQ) threads the bilayer. The Periplasmic segment spans residues 165-168 (EMLS). The helical transmembrane segment at 169-190 (WHWVFIVTGGIGIIWSLIWFKV) threads the bilayer. Residues 191–241 (YQPPRLTKGISKAELDYIRDGGGLVDGDAPVKKEARQPLTAKDWKLVFHRK) lie on the Cytoplasmic side of the membrane. The chain crosses the membrane as a helical span at residues 242 to 267 (LIGVYLGQFAVASTLWFFLTWFPNYL). The Periplasmic segment spans residues 268 to 276 (TQEKGITAL). The chain crosses the membrane as a helical span at residues 277 to 297 (KAGFMTTVPFLAAFVGVLLSG). At 298 to 314 (WVADLLVRKGFSLGFAR) the chain is on the cytoplasmic side. A helical transmembrane segment spans residues 315–333 (KTPIICGLLISTCIMGANY). The Periplasmic portion of the chain corresponds to 334–336 (TND). Residues 337-354 (PMMIMCLMALAFFGNGFA) form a helical membrane-spanning segment. Residues 355-373 (SITWSLVSSLAPMRLIGLT) lie on the Cytoplasmic side of the membrane. Trp-358 provides a ligand contact to D-galactonate. Residues 374–395 (GGVFNFAGGLGGITVPLVVGYL) traverse the membrane as a helical segment. Residues 396 to 400 (AQGYG) lie on the Periplasmic side of the membrane. A helical membrane pass occupies residues 401–423 (FAPALVYISAVALIGALSYILLV). The Cytoplasmic portion of the chain corresponds to 424 to 430 (GDVKRVG).

It belongs to the major facilitator superfamily. Phthalate permease family.

It is found in the cell inner membrane. The enzyme catalyses D-galactonate(in) + H(+)(in) = D-galactonate(out) + H(+)(out). Involved in D-galactonate metabolism. Catalyzes the proton-dependent uptake of galactonate into the cell. In Escherichia coli O6:H1 (strain CFT073 / ATCC 700928 / UPEC), this protein is D-galactonate transporter (dgoT).